The following is a 315-amino-acid chain: Small ribosomal subunit protein mS45 (315 aa).

The transit peptide at 1 to 66 (MRNSVEFSQL…SKYVACNSRS (66 aa)) directs the protein to the mitochondrion.

This sequence belongs to the mitochondrion-specific ribosomal protein mS45 family. In terms of assembly, component of the mitochondrial small ribosomal subunit (mt-SSU). Mature yeast 74S mitochondrial ribosomes consist of a small (37S) and a large (54S) subunit. The 37S small subunit contains a 15S ribosomal RNA (15S mt-rRNA) and at least 32 different proteins. The 54S large subunit contains a 21S rRNA (21S mt-rRNA) and at least 45 different proteins.

The protein resides in the mitochondrion. Functionally, component of the mitochondrial ribosome (mitoribosome), a dedicated translation machinery responsible for the synthesis of mitochondrial genome-encoded proteins, including at least some of the essential transmembrane subunits of the mitochondrial respiratory chain. The mitoribosomes are attached to the mitochondrial inner membrane and translation products are cotranslationally integrated into the membrane. Required for mitochondrial protein synthesis. Has a role in mitochondrial integrity and cell respiration. The protein is Small ribosomal subunit protein mS45 (bot1) of Schizosaccharomyces pombe (strain 972 / ATCC 24843) (Fission yeast).